We begin with the raw amino-acid sequence, 270 residues long: MKMTSKKMKDELMKKLSRPEWDFQYDSEKEVLRIEQKDSKKGINVSLPGVVAKWEVNKEKAIEEVAYYVQEALIAMHKEENSGAKILPVIRSTSFPKQAEEGNPFIMTDHTAETRIYYALDSNKTYRLIDERLLQKLELTEQQVREMALFNARSLGYEFKQDTVAGNTFYFLNTNDGYDATRILNESLLQSMREKISGDMVVAVPHQDVLIIADIVNEIGYDIIAQMTMKFFAEGHVPITSLSFVYEDGEFEPIFILAKNRKKTDGKEKG.

Belongs to the UPF0354 family.

The protein is UPF0354 protein BCG9842_B0431 of Bacillus cereus (strain G9842).